Consider the following 593-residue polypeptide: Proteasome-associated ATPase (593 aa).

Residues 23–95 (LLSQISYLEE…LKEEVDRLGQ (73 aa)) are a coiled coil. 282 to 287 (GCGKTL) provides a ligand contact to ATP. Residues 592 to 593 (YL) form a docks into pockets in the proteasome alpha-ring region.

The protein belongs to the AAA ATPase family. As to quaternary structure, homohexamer. Assembles into a hexameric ring structure that caps the 20S proteasome core. Strongly interacts with the prokaryotic ubiquitin-like protein Pup through a hydrophobic interface; the interacting region of ARC lies in its N-terminal coiled-coil domain. There is one Pup binding site per ARC hexamer ring. Upon ATP-binding, the C-terminus of ARC interacts with the alpha-rings of the proteasome core, possibly by binding to the intersubunit pockets.

It functions in the pathway protein degradation; proteasomal Pup-dependent pathway. Its function is as follows. ATPase which is responsible for recognizing, binding, unfolding and translocation of pupylated proteins into the bacterial 20S proteasome core particle. May be essential for opening the gate of the 20S proteasome via an interaction with its C-terminus, thereby allowing substrate entry and access to the site of proteolysis. Thus, the C-termini of the proteasomal ATPase may function like a 'key in a lock' to induce gate opening and therefore regulate proteolysis. The polypeptide is Proteasome-associated ATPase (Geodermatophilus obscurus (strain ATCC 25078 / DSM 43160 / JCM 3152 / CCUG 61914 / KCC A-0152 / KCTC 9177 / NBRC 13315 / NRRL B-3577 / G-20)).